The primary structure comprises 151 residues: Sec-independent protein translocase protein TatB (151 aa).

Residues 1–21 (MFGMSLPEIIIIAVIAVIFLG) traverse the membrane as a helical segment. A compositionally biased stretch (low complexity) spans 120-131 (NNDPLNNETLNE). Residues 120–151 (NNDPLNNETLNEQPSKPSPNLNLENKEIKKEA) are disordered. Residues 132–142 (QPSKPSPNLNL) show a composition bias toward polar residues.

The protein belongs to the TatB family. As to quaternary structure, the Tat system comprises two distinct complexes: a TatABC complex, containing multiple copies of TatA, TatB and TatC subunits, and a separate TatA complex, containing only TatA subunits. Substrates initially bind to the TatABC complex, which probably triggers association of the separate TatA complex to form the active translocon.

The protein localises to the cell inner membrane. Functionally, part of the twin-arginine translocation (Tat) system that transports large folded proteins containing a characteristic twin-arginine motif in their signal peptide across membranes. Together with TatC, TatB is part of a receptor directly interacting with Tat signal peptides. TatB may form an oligomeric binding site that transiently accommodates folded Tat precursor proteins before their translocation. This Campylobacter fetus subsp. fetus (strain 82-40) protein is Sec-independent protein translocase protein TatB.